The primary structure comprises 890 residues: Kinesin-like protein KIN-7C, mitochondrial (890 aa).

Residues M1–S13 are compositionally biased toward polar residues. A disordered region spans residues M1–A66. Residues M1 to K73 constitute a mitochondrion transit peptide. Positions S40–A66 are enriched in low complexity. Positions N75–V394 constitute a Kinesin motor domain. G155–T162 provides a ligand contact to ATP. Residues E395–L468 adopt a coiled-coil conformation. Residues D511–I595 form a disordered region. Residues S569–S579 show a composition bias toward low complexity. 2 coiled-coil regions span residues H664–I693 and A729–R765. The segment at T768–T797 is disordered. The stretch at N818 to E884 forms a coiled coil.

It belongs to the TRAFAC class myosin-kinesin ATPase superfamily. Kinesin family. KIN-7 subfamily.

The protein resides in the mitochondrion. The polypeptide is Kinesin-like protein KIN-7C, mitochondrial (Arabidopsis thaliana (Mouse-ear cress)).